Consider the following 617-residue polypeptide: Proline--tRNA ligase (617 aa).

It belongs to the class-II aminoacyl-tRNA synthetase family. ProS type 1 subfamily. Homodimer.

Its subcellular location is the cytoplasm. It carries out the reaction tRNA(Pro) + L-proline + ATP = L-prolyl-tRNA(Pro) + AMP + diphosphate. Functionally, catalyzes the attachment of proline to tRNA(Pro) in a two-step reaction: proline is first activated by ATP to form Pro-AMP and then transferred to the acceptor end of tRNA(Pro). As ProRS can inadvertently accommodate and process non-cognate amino acids such as alanine and cysteine, to avoid such errors it has two additional distinct editing activities against alanine. One activity is designated as 'pretransfer' editing and involves the tRNA(Pro)-independent hydrolysis of activated Ala-AMP. The other activity is designated 'posttransfer' editing and involves deacylation of mischarged Ala-tRNA(Pro). The misacylated Cys-tRNA(Pro) is not edited by ProRS. This is Proline--tRNA ligase from Streptococcus agalactiae serotype Ia (strain ATCC 27591 / A909 / CDC SS700).